Reading from the N-terminus, the 307-residue chain is uncharacterized protein (307 aa).

This is an uncharacterized protein from Bacillus subtilis (strain 168).